The chain runs to 461 residues: CUGBP Elav-like family member 3 (461 aa).

2 RRM domains span residues 7–88 and 95–175; these read IKLF…PADS and RKLF…FADT. Residues 345–358 are compositionally biased toward pro residues; sequence PPALVAQQPPPPPQ. Residues 345 to 375 form a disordered region; sequence PPALVAQQPPPPPQQQQQQQQQQQQREGPDG. The segment covering 359–369 has biased composition (low complexity); it reads QQQQQQQQQQQ. The region spanning 376 to 454 is the RRM 3 domain; the sequence is CNIFIYHLPQ…KRLKVQLKRP (79 aa).

The protein belongs to the CELF/BRUNOL family.

The protein resides in the nucleus. The protein localises to the cytoplasm. RNA-binding protein involved in the regulation of pre-mRNA alternative splicing. Mediates exon inclusion and/or exclusion in pre-mRNA that are subject to tissue-specific and developmentally regulated alternative splicing. Specifically activates exon 5 inclusion of cardiac isoforms of TNNT2 during heart remodeling at the juvenile to adult transition. Activates the splicing of MAPT/Tau exon 10. Binds to muscle-specific splicing enhancer (MSE) intronic sites flanking the alternative exon 5 of TNNT2 pre-mRNA. The polypeptide is CUGBP Elav-like family member 3 (CELF3) (Bos taurus (Bovine)).